A 449-amino-acid chain; its full sequence is Ribulose bisphosphate carboxylase large chain (449 aa).

Residue Lys7 is modified to N6,N6,N6-trimethyllysine. Substrate contacts are provided by Asn116 and Thr166. The Proton acceptor role is filled by Lys168. Lys170 is a binding site for substrate. Residues Lys194, Asp196, and Glu197 each contribute to the Mg(2+) site. At Lys194 the chain carries N6-carboxylysine. Residue His287 is the Proton acceptor of the active site. Substrate contacts are provided by Arg288, His320, and Ser372.

The protein belongs to the RuBisCO large chain family. Type I subfamily. Heterohexadecamer of 8 large chains and 8 small chains; disulfide-linked. The disulfide link is formed within the large subunit homodimers. It depends on Mg(2+) as a cofactor. The disulfide bond which can form in the large chain dimeric partners within the hexadecamer appears to be associated with oxidative stress and protein turnover.

Its subcellular location is the plastid. The protein resides in the chloroplast. It catalyses the reaction 2 (2R)-3-phosphoglycerate + 2 H(+) = D-ribulose 1,5-bisphosphate + CO2 + H2O. The enzyme catalyses D-ribulose 1,5-bisphosphate + O2 = 2-phosphoglycolate + (2R)-3-phosphoglycerate + 2 H(+). RuBisCO catalyzes two reactions: the carboxylation of D-ribulose 1,5-bisphosphate, the primary event in carbon dioxide fixation, as well as the oxidative fragmentation of the pentose substrate in the photorespiration process. Both reactions occur simultaneously and in competition at the same active site. In Aspidistra elatior (Cast-iron plant), this protein is Ribulose bisphosphate carboxylase large chain.